Reading from the N-terminus, the 201-residue chain is tRNA (guanine-N(7)-)-methyltransferase (201 aa).

The S-adenosyl-L-methionine site is built by Glu33, Glu58, Asp85, and Asp106. Asp106 is an active-site residue. Residues Lys110, Asp142, and 180 to 183 (TTYE) each bind substrate.

This sequence belongs to the class I-like SAM-binding methyltransferase superfamily. TrmB family.

The catalysed reaction is guanosine(46) in tRNA + S-adenosyl-L-methionine = N(7)-methylguanosine(46) in tRNA + S-adenosyl-L-homocysteine. Its pathway is tRNA modification; N(7)-methylguanine-tRNA biosynthesis. Functionally, catalyzes the formation of N(7)-methylguanine at position 46 (m7G46) in tRNA. The polypeptide is tRNA (guanine-N(7)-)-methyltransferase (Mesomycoplasma hyopneumoniae (strain J / ATCC 25934 / NCTC 10110) (Mycoplasma hyopneumoniae)).